Reading from the N-terminus, the 711-residue chain is Zinc finger CCCH domain-containing protein 43 (711 aa).

A disordered region spans residues methionine 1–aspartate 49. Residues lysine 35–glutamate 47 show a composition bias toward basic and acidic residues. 3 C3H1-type zinc fingers span residues arginine 44–proline 72, arginine 90–arginine 118, and arginine 157–proline 185. The MIF4G domain maps to leucine 384–glutamate 637.

The chain is Zinc finger CCCH domain-containing protein 43 from Oryza sativa subsp. japonica (Rice).